We begin with the raw amino-acid sequence, 618 residues long: UvrABC system protein C (618 aa).

The GIY-YIG domain occupies 20–98 (TAPGVYRMYA…IKSLSPRYNV (79 aa)). The 36-residue stretch at 207-242 (DQLGEEIMHSMQQASEALEFERAARLRDLLSSLRSM) folds into the UVR domain.

It belongs to the UvrC family. Interacts with UvrB in an incision complex.

The protein localises to the cytoplasm. Its function is as follows. The UvrABC repair system catalyzes the recognition and processing of DNA lesions. UvrC both incises the 5' and 3' sides of the lesion. The N-terminal half is responsible for the 3' incision and the C-terminal half is responsible for the 5' incision. The chain is UvrABC system protein C from Xanthomonas campestris pv. campestris (strain 8004).